Consider the following 748-residue polypeptide: Probable transcriptional regulator SLK1 (748 aa).

Disordered stretches follow at residues 67 to 93 and 138 to 163; these read QHLP…RENN and QQRL…QQQQ. Positions 71–81 are enriched in low complexity; the sequence is QQQQQQLLQQQ. Positions 204–451 are dimerization; it reads PAENCITYWR…EQKIGPIEGL (248 aa). Positions 213–227 match the Nuclear localization signal motif; sequence RKFVAEYFSPRAKQR. Over residues 572 to 587 the composition is skewed to polar residues; it reads NAMNNPNSNTGKQEGF. Disordered regions lie at residues 572–653 and 667–712; these read NAMN…GNTP and ENGG…NNSF. Low complexity predominate over residues 588 to 606; that stretch reads SSQNPTPNSNQSPSSSSQQ. Over residues 615–653 the composition is skewed to polar residues; sequence FPNSPQMQQQQRTMNGPTNILPQNHPHQLQSPHSHGNTP. Residues 667–686 are compositionally biased toward low complexity; the sequence is ENGGSVQQQQAFSGQSGSNS. The segment covering 687-699 has biased composition (polar residues); sequence NAERNTTASTSNI.

Belongs to the adn1/SEU family. As to quaternary structure, forms corepressor complexes with LUH; LUH is the transcription repressor subunit and SLK1 the specific DNA-binding adapters. In terms of tissue distribution, expressed in young flower meristems, ovules and the carpel margin meristem.

The protein resides in the nucleus. Functionally, probable transcription regulator that functions in the development of the carpel margin meristem similarly to SEUSS (SEU). In association with SEU, supports organ development from meristematic regions by facilitating auxin response and thus organ initiation, and by sustaining meristematic potential through the maintenance of PHABULOSA expression. DNA-binding adapter subunit of the SEU-SLK1 transcriptional corepressor of abiotic stress (e.g. salt and osmotic stress) response genes. The sequence is that of Probable transcriptional regulator SLK1 (SLK1) from Arabidopsis thaliana (Mouse-ear cress).